A 137-amino-acid polypeptide reads, in one-letter code: Basic phospholipase A2 homolog Cax-K49 (137 aa).

Positions 1–16 (MRTFWIVAMLLVGVEG) are cleaved as a signal peptide. Disulfide bonds link cysteine 42-cysteine 131, cysteine 44-cysteine 60, cysteine 59-cysteine 111, cysteine 65-cysteine 137, cysteine 66-cysteine 104, cysteine 73-cysteine 97, and cysteine 91-cysteine 102. The important for membrane-damaging activities in eukaryotes and bacteria; heparin-binding stretch occupies residues 121–133 (KKYKIYPKFLCKK).

In terms of assembly, homodimer; non-covalently linked. In terms of tissue distribution, expressed by the venom gland.

It is found in the secreted. Snake venom phospholipase A2 homolog that lacks enzymatic activity. Displays edema-inducing activities and may be myotoxic. A model of myotoxic mechanism has been proposed: an apo Lys49-PLA2 is activated by the entrance of a hydrophobic molecule (e.g. fatty acid) at the hydrophobic channel of the protein leading to a reorientation of a monomer. This reorientation causes a transition between 'inactive' to 'active' states, causing alignment of C-terminal and membrane-docking sites (MDoS) side-by-side and putting the membrane-disruption sites (MDiS) in the same plane, exposed to solvent and in a symmetric position for both monomers. The MDoS region stabilizes the toxin on membrane by the interaction of charged residues with phospholipid head groups. Subsequently, the MDiS region destabilizes the membrane with penetration of hydrophobic residues. This insertion causes a disorganization of the membrane, allowing an uncontrolled influx of ions (i.e. calcium and sodium), and eventually triggering irreversible intracellular alterations and cell death. The protein is Basic phospholipase A2 homolog Cax-K49 of Crotalus atrox (Western diamondback rattlesnake).